The primary structure comprises 556 residues: Genetic interactor of prohibitins 3, mitochondrial (556 aa).

Residues 1-21 (MLNLCHALRGVRQFSCSVIVK) constitute a mitochondrion transit peptide. One can recognise a CP-type G domain in the interval 113 to 305 (ESTLNDILNY…LFDLPGYSTS (193 aa)).

It belongs to the TRAFAC class YlqF/YawG GTPase family. GEP3 subfamily.

It is found in the mitochondrion. In terms of biological role, interacts genetically with prohibitins and thus may be involved in the mitochondrial lipid metabolism. This Saccharomyces cerevisiae (strain Lalvin EC1118 / Prise de mousse) (Baker's yeast) protein is Genetic interactor of prohibitins 3, mitochondrial (GEP3).